Here is a 550-residue protein sequence, read N- to C-terminus: MLKNINPTQTQAWKALTAHFESAQDMDMKELFAQDAKRFESFSTRFGSDILVDYSKNLIDAETMQHLFALANETEVKSAIEAMFGGDAINKTEGRSVLHTALRNRSDKPVMVDGKDVMPAVNAVLAKMELFTHRIVSGEWKGYTGKEITDVVNIGIGGSDLGPYMVTEALTPYKTRLNMHFVSNVDGTHIVETLKPLNPETTLFLVASKTFTTQETMTNAHSARDWFLAEAGDSAHVAKHFAALSTNAASVAEFGIDTDNMFEFWDWVGGRYSLWSAIGLSISLSIGFDNFAELLDGAHEMDNHFASTEFESNIPVILALIGVWYNNFHGAESEAILPYDQYMHRFAAYFQQGNMESNGKFVDREGNPVEYQTGPIIWGEPGTNGQHAFYQLIHQGTKLIPSDFIAPAISHNPASDHHQKLMSNFFAQTEALAFGKTKETVEAEFLAAGKTAEEVAELVPFKVFEGNRPTNSILVKQINPRSLGNLIAMYEHKIFVQGVIWNIFSFDQWGVELGKQLANQILPELADDAQVTSHDSSTNGLINAFKALKA.

The active-site Proton donor is the Glu356. Active-site residues include His387 and Lys515.

The protein belongs to the GPI family.

It localises to the cytoplasm. It catalyses the reaction alpha-D-glucose 6-phosphate = beta-D-fructose 6-phosphate. Its pathway is carbohydrate biosynthesis; gluconeogenesis. The protein operates within carbohydrate degradation; glycolysis; D-glyceraldehyde 3-phosphate and glycerone phosphate from D-glucose: step 2/4. Catalyzes the reversible isomerization of glucose-6-phosphate to fructose-6-phosphate. This Vibrio atlanticus (strain LGP32) (Vibrio splendidus (strain Mel32)) protein is Glucose-6-phosphate isomerase.